A 257-amino-acid chain; its full sequence is Transmembrane protein 101 (257 aa).

8 helical membrane-spanning segments follow: residues 21–40 (VLLTRCPFWGCFSQLMLYAE), 52–72 (VPYLYFDMGAAVLCASFMSFG), 77–97 (WFALGAALQLAISTYAAYIGG), 110–130 (YSRTVAIIGGFLVLASGAGEL), 139–159 (SLQSTGQVFLGIYLICVAYSL), 182–202 (LFFVLYGILALAFLSGYYVTL), 206–226 (ILAVLLPPVMLLIDGNVAYWH), and 233–253 (FWNQMKLLGESVGIFGTAVIL).

The protein resides in the membrane. Functionally, may activate NF-kappa-B signaling pathways. The protein is Transmembrane protein 101 (TMEM101) of Homo sapiens (Human).